A 123-amino-acid chain; its full sequence is ATP synthase epsilon chain (123 aa).

It belongs to the ATPase epsilon chain family. As to quaternary structure, F-type ATPases have 2 components, CF(1) - the catalytic core - and CF(0) - the membrane proton channel. CF(1) has five subunits: alpha(3), beta(3), gamma(1), delta(1), epsilon(1). CF(0) has three main subunits: a, b and c.

Its subcellular location is the cell inner membrane. Produces ATP from ADP in the presence of a proton gradient across the membrane. The protein is ATP synthase epsilon chain of Helicobacter pylori (strain P12).